The sequence spans 165 residues: Sulfopyruvate decarboxylase subunit alpha (165 aa).

This sequence belongs to the ComD family. Heterododecamer composed of 6 subunits alpha and 6 subunits beta.

It catalyses the reaction 3-sulfopyruvate + H(+) = sulfoacetaldehyde + CO2. It functions in the pathway cofactor biosynthesis; coenzyme M biosynthesis; sulfoacetaldehyde from phosphoenolpyruvate and sulfite: step 4/4. In terms of biological role, involved in the biosynthesis of the coenzyme M (2-mercaptoethanesulfonic acid). Catalyzes the decarboxylation of sulfopyruvate to sulfoacetaldehyde. In Methanothermobacter thermautotrophicus (strain ATCC 29096 / DSM 1053 / JCM 10044 / NBRC 100330 / Delta H) (Methanobacterium thermoautotrophicum), this protein is Sulfopyruvate decarboxylase subunit alpha.